The sequence spans 356 residues: Vacuolar protein sorting-associated protein 26 (356 aa).

The disordered stretch occupies residues 301–356 (MRRPGTEDDEEEKQTTSIPGTQKFTAPAPVEHPKPESPRSDPKSGSTSPDDNSDSS). Positions 315–324 (TTSIPGTQKF) are enriched in polar residues. Positions 331-342 (EHPKPESPRSDP) are enriched in basic and acidic residues.

The protein belongs to the VPS26 family.

In terms of biological role, may play a role in vesicular protein sorting, similar to the yeast retromer proteins. This chain is Vacuolar protein sorting-associated protein 26 (vps-26), found in Caenorhabditis elegans.